A 697-amino-acid chain; its full sequence is Ion-translocating oxidoreductase complex subunit C (697 aa).

2 4Fe-4S ferredoxin-type domains span residues 366-397 (AEMG…QQLY) and 407-436 (KARN…VQYY). The [4Fe-4S] cluster site is built by cysteine 377, cysteine 380, cysteine 383, cysteine 387, cysteine 416, cysteine 419, cysteine 422, and cysteine 426. The interval 576 to 674 (AQLESEPVKS…APEEDPRKAA (99 aa)) is disordered. The span at 581–596 (EPVKSESEAPEEDPRK) shows a compositional bias: basic and acidic residues. The segment covering 597 to 615 (AAVAAAIARVKAKKAAQAQ) has biased composition (low complexity). Basic and acidic residues predominate over residues 619-634 (EPVKSESEAPEEDPRK). The segment covering 635 to 653 (AAVAAAIARVKAKKAAQAQ) has biased composition (low complexity). A compositionally biased stretch (basic and acidic residues) spans 657–672 (EPVKSESEAPEEDPRK).

This sequence belongs to the 4Fe4S bacterial-type ferredoxin family. RnfC subfamily. As to quaternary structure, the complex is composed of six subunits: RnfA, RnfB, RnfC, RnfD, RnfE and RnfG. [4Fe-4S] cluster serves as cofactor.

The protein localises to the cell inner membrane. Its function is as follows. Part of a membrane-bound complex that couples electron transfer with translocation of ions across the membrane. The polypeptide is Ion-translocating oxidoreductase complex subunit C (Yersinia enterocolitica serotype O:8 / biotype 1B (strain NCTC 13174 / 8081)).